The primary structure comprises 327 residues: MSDIMNIDSIISRLLEVRGARPGKNVQLSESEIRSLCLKSREIFLSQPILLELEAPLKICGDIHGQYYDLLRLFEYGGFPPESNYLFLGDYVDRGKQSLETICLLLAYKIKYAENFFLLRGNHECASINRIYGFYDECKRRYTIKLWKTFTDCFNCLPVAAIVDEKIFCCHGGLSPDLSSMEQIRRIMRPTDVPDQGLLCDLLWSDPDKDTMGWGENDRGVSFTFGAEVVGKFLQKHEFDLICRAHQVVEDGYEFFAKRQLVTLFSAPNYCGEFDNAGAMMSVDDTLMCSFQILKPADKRRFVYPNFGSSGRPLTPPRGANNKNKKK.

Mn(2+)-binding residues include aspartate 62, histidine 64, aspartate 90, and asparagine 122. Histidine 123 (proton donor) is an active-site residue. Mn(2+) contacts are provided by histidine 171 and histidine 246. The tract at residues 308-327 is disordered; sequence GSSGRPLTPPRGANNKNKKK. Threonine 315 bears the Phosphothreonine mark.

This sequence belongs to the PPP phosphatase family. PP-1 subfamily. In terms of assembly, interacts with Nop17l. The cofactor is Mn(2+).

It carries out the reaction O-phospho-L-seryl-[protein] + H2O = L-seryl-[protein] + phosphate. The enzyme catalyses O-phospho-L-threonyl-[protein] + H2O = L-threonyl-[protein] + phosphate. This is Serine/threonine-protein phosphatase alpha-1 isoform (Pp1alpha-96A) from Drosophila melanogaster (Fruit fly).